The primary structure comprises 101 residues: Cilia- and flagella-associated protein 141 (101 aa).

In terms of assembly, microtubule inner protein component of sperm flagellar doublet microtubules. As to expression, expressed in airway epithelial cells.

The protein resides in the cytoplasm. Its subcellular location is the cytoskeleton. The protein localises to the cilium axoneme. It is found in the flagellum axoneme. Microtubule inner protein (MIP) part of the dynein-decorated doublet microtubules (DMTs) in cilia axoneme, which is required for motile cilia beating. This is Cilia- and flagella-associated protein 141 from Homo sapiens (Human).